A 97-amino-acid polypeptide reads, in one-letter code: U6-theraphotoxin-Hhn1a 4 (97 aa).

Positions 1 to 33 (MLIKQFSRRSKNMKVQILLAFAALFVLAVGSYA) are cleaved as a signal peptide. Positions 34-61 (SESKKLDLRDALLSAMFSADYQLNPQER) are excised as a propeptide. Cystine bridges form between C63-C77, C70-C82, and C76-C89.

The protein belongs to the neurotoxin 10 (Hwtx-1) family. 12 (Hntx-12) subfamily. Expressed by the venom gland.

The protein localises to the secreted. Its function is as follows. Ion channel inhibitor. This chain is U6-theraphotoxin-Hhn1a 4, found in Cyriopagopus hainanus (Chinese bird spider).